A 677-amino-acid polypeptide reads, in one-letter code: Pre-mRNA-splicing factor CLF1 (677 aa).

16 HAT repeats span residues 52–84 (EYQG…WELE), 86–118 (KEFR…AEMK), 120–152 (RNIN…MEEM), 154–185 (GNIP…LEKR), 187–218 (NEFD…FEEE), 220–255 (GTSD…YEAK), 257–291 (KEFE…FEKQ), 301–333 (VILS…LEES), 335–369 (GDVE…LWIF), 379–415 (KDME…FEIR), 417–448 (MDLQ…LERQ), 450–482 (FEFV…LERG), 484–518 (DDID…FEEY), 520–551 (GEYD…FEIN), 570–608 (EAKR…FEQT), and 613–646 (DDIA…YMFP).

Belongs to the crooked-neck family. In terms of assembly, associated with the spliceosome.

The protein resides in the nucleus. Involved in pre-mRNA splicing and cell cycle progression. Required for the spliceosome assembly and initiation of the DNA replication. This is Pre-mRNA-splicing factor CLF1 (CLF1) from Paracoccidioides brasiliensis.